Reading from the N-terminus, the 124-residue chain is Apolipoprotein C-IV (124 aa).

Residues 1–27 (MSLLRCRQQTLPSLCLSVLFLACFVAS) form the signal peptide.

This sequence belongs to the apolipoprotein C4 family.

The protein resides in the secreted. Its function is as follows. May participate in lipoprotein metabolism. The polypeptide is Apolipoprotein C-IV (Apoc4) (Rattus norvegicus (Rat)).